A 511-amino-acid chain; its full sequence is Prolyl 3-hydroxylase OGFOD1 (511 aa).

Residues 1–20 (MTGKRGTAAGTDGSGNKKGK) form a disordered region. The Fe2OG dioxygenase domain occupies 138–240 (KTVDISCAQY…RLSVSGWFHG (103 aa)). Residues H156 and D158 each coordinate Fe cation. Y170 lines the 2-oxoglutarate pocket. Position 219 (H219) interacts with Fe cation. Position 231 (R231) interacts with 2-oxoglutarate. The segment at 372 to 403 (NEESDEGEGPSEPNTVSQQGASSEDDKVPSCS) is disordered.

This sequence belongs to the TPA1 family. As to quaternary structure, monomer. The cofactor is Fe(2+). It depends on L-ascorbate as a cofactor.

It is found in the cytoplasm. The protein resides in the nucleus. It catalyses the reaction [ribosomal protein uS12]-L-proline + 2-oxoglutarate + O2 = [ribosomal protein uS12]-(3S)-3-hydroxy-L-proline + succinate + CO2. Functionally, prolyl 3-hydroxylase that catalyzes 3-hydroxylation of 'Pro-62' of small ribosomal subunit uS12 (rps23), thereby regulating protein translation termination efficiency. Involved in stress granule formation. The sequence is that of Prolyl 3-hydroxylase OGFOD1 (ogfod1) from Xenopus laevis (African clawed frog).